The sequence spans 704 residues: Elongation factor G 1 (704 aa).

Residues 8–290 (ERYRNIGICA…CVVEYMPAPT (283 aa)) enclose the tr-type G domain. GTP-binding positions include 17-24 (AHVDAGKT), 88-92 (DTPGH), and 142-145 (NKMD).

It belongs to the TRAFAC class translation factor GTPase superfamily. Classic translation factor GTPase family. EF-G/EF-2 subfamily.

It is found in the cytoplasm. In terms of biological role, catalyzes the GTP-dependent ribosomal translocation step during translation elongation. During this step, the ribosome changes from the pre-translocational (PRE) to the post-translocational (POST) state as the newly formed A-site-bound peptidyl-tRNA and P-site-bound deacylated tRNA move to the P and E sites, respectively. Catalyzes the coordinated movement of the two tRNA molecules, the mRNA and conformational changes in the ribosome. This is Elongation factor G 1 from Pseudoalteromonas translucida (strain TAC 125).